Here is a 432-residue protein sequence, read N- to C-terminus: Adenylosuccinate synthetase (432 aa).

GTP is bound by residues Gly-13–Lys-19 and Gly-41–Thr-43. Catalysis depends on Asp-14, which acts as the Proton acceptor. 2 residues coordinate Mg(2+): Asp-14 and Gly-41. Residues Asp-14–Lys-17, Asn-39–His-42, Thr-130, Arg-144, Gln-225, Thr-240, and Arg-306 contribute to the IMP site. His-42 (proton donor) is an active-site residue. Substrate is bound at residue Thr-302–Arg-308. Residues Arg-308, Lys-334–Asp-336, and Ser-416–Gly-418 each bind GTP.

It belongs to the adenylosuccinate synthetase family. As to quaternary structure, homodimer. Requires Mg(2+) as cofactor.

It is found in the cytoplasm. It catalyses the reaction IMP + L-aspartate + GTP = N(6)-(1,2-dicarboxyethyl)-AMP + GDP + phosphate + 2 H(+). It functions in the pathway purine metabolism; AMP biosynthesis via de novo pathway; AMP from IMP: step 1/2. Plays an important role in the de novo pathway of purine nucleotide biosynthesis. Catalyzes the first committed step in the biosynthesis of AMP from IMP. The protein is Adenylosuccinate synthetase of Herminiimonas arsenicoxydans.